The sequence spans 256 residues: Phosphonates import ATP-binding protein PhnC (256 aa).

Positions 5 to 253 constitute an ABC transporter domain; it reads LRITGLVKEY…MLKTIYGGES (249 aa). 38 to 45 provides a ligand contact to ATP; it reads GPSGTGKS.

It belongs to the ABC transporter superfamily. Phosphonates importer (TC 3.A.1.9.1) family. In terms of assembly, the complex is composed of two ATP-binding proteins (PhnC), two transmembrane proteins (PhnE) and a solute-binding protein (PhnD).

It localises to the cell inner membrane. The catalysed reaction is phosphonate(out) + ATP + H2O = phosphonate(in) + ADP + phosphate + H(+). Its function is as follows. Part of the ABC transporter complex PhnCDE involved in phosphonates import. Responsible for energy coupling to the transport system. This is Phosphonates import ATP-binding protein PhnC from Bordetella parapertussis (strain 12822 / ATCC BAA-587 / NCTC 13253).